Here is a 123-residue protein sequence, read N- to C-terminus: Large ribosomal subunit protein bL12 (123 aa).

The protein belongs to the bacterial ribosomal protein bL12 family. Homodimer. Part of the ribosomal stalk of the 50S ribosomal subunit. Forms a multimeric L10(L12)X complex, where L10 forms an elongated spine to which 2 to 4 L12 dimers bind in a sequential fashion. Binds GTP-bound translation factors.

In terms of biological role, forms part of the ribosomal stalk which helps the ribosome interact with GTP-bound translation factors. Is thus essential for accurate translation. This Wigglesworthia glossinidia brevipalpis protein is Large ribosomal subunit protein bL12.